A 585-amino-acid chain; its full sequence is MTDRLERKLAIAANQDKADLLIKNGQIVDVFQLETFEGDVVIADGEIVAISDPGTYEAHEEVDAKGAFIAPAFIDGHVHIESSMVAPEQFAKVVVPHGVTTVIADPHEIANVAGVQGVEYMLDASEGIPLDVKMMVPSCVPATPFEHSGARLTAEEVAELFRDPRIFGLGEVMDYPAVLTRDQEMMAKLKAAHSEGRIVDGHGAGLDSVALNAYTAAGIGNDHEAVTPEEAKARLQRGMYLLIREGTAAKDFDALMKAITPMNSRRALFVTDDKHLDELVEEGSIDHHVRKAIQIGVNPLQAIQMASLNAAECFKLAKKGAIAPGFTADLLFIEDLQSLAITHVFKNGTCVAKNGKLIVPIRETVQPPQRLLESVNMKLVTKEQLELSLQSDEEAHLIQIQPGSIVTKHIREKVAVKDGVFIPSVARDQLKLVVAERHHKRGTVGVGIVKGFGLTKGAIATTVAHDSHNIVAVGTNDEDLLAAIKELENIQGGMTIVKDGKVLVSLPLTIGGLMSDQSYDVVCEQIKSVDAAIGALGFVGDFNPFLTLSFLALPVIPEIKLTDQGLFDVTSFSFIDQQVYAEETN.

Belongs to the metallo-dependent hydrolases superfamily. Adenine deaminase family. Requires Mn(2+) as cofactor.

It catalyses the reaction adenine + H2O + H(+) = hypoxanthine + NH4(+). The sequence is that of Adenine deaminase from Halalkalibacterium halodurans (strain ATCC BAA-125 / DSM 18197 / FERM 7344 / JCM 9153 / C-125) (Bacillus halodurans).